The sequence spans 311 residues: Heme A synthase (311 aa).

Over 1-6 the chain is Cytoplasmic; it reads MQRFIK. A helical transmembrane segment spans residues 7–27; that stretch reads WLAVITSLDLLIVLLGGALVT. The Extracellular segment spans residues 28–62; the sequence is KTGSGQGCGKSWPLCNGEFVPSNLSMETIIELSHR. Cys-35 and Cys-42 form a disulfide bridge. The active site involves Glu-58. His-61 serves as a coordination point for heme o. Residues 63 to 83 form a helical membrane-spanning segment; the sequence is LTSGSAGILVTLLCILSWKYY. Residues 84 to 91 are Cytoplasmic-facing; that stretch reads KHVRETKT. The chain crosses the membrane as a helical span at residues 92–112; it reads LAILSFVFLVAQALMGAAAVV. The Extracellular segment spans residues 113-121; the sequence is WGQMPAVLA. The chain crosses the membrane as a helical span at residues 122 to 142; that stretch reads IHFGISLISFASVILLTCLIF. His-123 contributes to the heme o binding site. Topologically, residues 143–159 are cytoplasmic; it reads EIDQKFDARSLIMDKKM. Residues 160 to 180 traverse the membrane as a helical segment; sequence KFHIYGVTIYSYIVVYTGALV. Residues 181–211 are Extracellular-facing; that stretch reads RHERASLACPDFPLCSKNRPMPTQLHEWVQM. Residues Cys-189 and Cys-195 are joined by a disulfide bond. The chain crosses the membrane as a helical span at residues 212-232; the sequence is GHRVAAMLIFAWILYAMILAI. A heme b-binding site is contributed by His-213. Over 233 to 243 the chain is Cytoplasmic; sequence RHYKQQPVVYW. Residues 244 to 264 traverse the membrane as a helical segment; it reads GWIISFILVTLQAVVGVLVVF. At 265–271 the chain is on the extracellular side; sequence TNASLAM. A helical membrane pass occupies residues 272-292; sequence ALLHSLFISCLFAVLCYLVML. His-275 contacts heme b. Residues 293–311 are Cytoplasmic-facing; that stretch reads GTRIKVNAKEAGSTSKQTK.

It belongs to the COX15/CtaA family. Type 1 subfamily. As to quaternary structure, interacts with CtaB. Heme b is required as a cofactor.

The protein resides in the cell membrane. It catalyses the reaction Fe(II)-heme o + 2 A + H2O = Fe(II)-heme a + 2 AH2. Its pathway is porphyrin-containing compound metabolism; heme A biosynthesis; heme A from heme O: step 1/1. Functionally, catalyzes the conversion of heme O to heme A by two successive hydroxylations of the methyl group at C8. The first hydroxylation forms heme I, the second hydroxylation results in an unstable dihydroxymethyl group, which spontaneously dehydrates, resulting in the formyl group of heme A. In Bacillus cereus (strain G9842), this protein is Heme A synthase.